The chain runs to 592 residues: Putative nucleoside-triphosphatase (592 aa).

The active-site Proton acceptor is the Glu200.

The protein belongs to the GDA1/CD39 NTPase family.

The catalysed reaction is a ribonucleoside 5'-triphosphate + H2O = a ribonucleoside 5'-diphosphate + phosphate + H(+). The protein is Putative nucleoside-triphosphatase (NTP4) of Toxoplasma gondii.